Reading from the N-terminus, the 208-residue chain is Protein-L-isoaspartate O-methyltransferase (208 aa).

The active site involves serine 59.

It belongs to the methyltransferase superfamily. L-isoaspartyl/D-aspartyl protein methyltransferase family.

Its subcellular location is the cytoplasm. The catalysed reaction is [protein]-L-isoaspartate + S-adenosyl-L-methionine = [protein]-L-isoaspartate alpha-methyl ester + S-adenosyl-L-homocysteine. Functionally, catalyzes the methyl esterification of L-isoaspartyl residues in peptides and proteins that result from spontaneous decomposition of normal L-aspartyl and L-asparaginyl residues. It plays a role in the repair and/or degradation of damaged proteins. This chain is Protein-L-isoaspartate O-methyltransferase, found in Klebsiella pneumoniae (strain 342).